Consider the following 247-residue polypeptide: E3 SUMO-protein ligase NSE2 (247 aa).

The residue at position 1 (M1) is an N-acetylmethionine. Residues K90 and K107 each participate in a glycyl lysine isopeptide (Lys-Gly) (interchain with G-Cter in SUMO2) cross-link. S116 bears the Phosphoserine mark. Glycyl lysine isopeptide (Lys-Gly) (interchain with G-Cter in SUMO2) cross-links involve residues K125 and K130. The SP-RING-type zinc-finger motif lies at 154-240 (VDEDMIVTQS…LRRAIESHNK (87 aa)). Residues C185, H187, C210, and C215 each contribute to the Zn(2+) site.

The protein belongs to the NSE2 family. As to quaternary structure, component of the SMC5-SMC6 complex which consists at least of SMC5, SMC6, NSMCE2, NSMCE1, NSMCE4A or EID3 and NSMCE3. Post-translationally, sumoylated, possibly via autosumoylation.

It localises to the nucleus. The protein localises to the chromosome. Its subcellular location is the telomere. The protein resides in the PML body. Its pathway is protein modification; protein sumoylation. Functionally, E3 SUMO-protein ligase component of the SMC5-SMC6 complex, a complex involved in DNA double-strand break repair by homologous recombination. Is not be required for the stability of the complex. The complex may promote sister chromatid homologous recombination by recruiting the SMC1-SMC3 cohesin complex to double-strand breaks. Acts as an E3 ligase mediating SUMO attachment to various proteins such as SMC6L1 and TSNAX, the shelterin complex subunits TERF1, TERF2, TINF2 and TERF2IP, RAD51AP1, and maybe the cohesin components RAD21 and STAG2. Required for recruitment of telomeres to PML nuclear bodies. Required for sister chromatid cohesion during prometaphase and mitotic progression. The polypeptide is E3 SUMO-protein ligase NSE2 (Nsmce2) (Mus musculus (Mouse)).